Here is a 282-residue protein sequence, read N- to C-terminus: V-set domain-containing T-cell activation inhibitor 1 (282 aa).

Residues 1-24 form the signal peptide; that stretch reads MASLGQIIFWSIINVIIILAGAIV. Ig-like V-type domains follow at residues 35–144 and 153–241; these read HFIT…ANLE and PEIN…IKVT. 2 disulfide bridges follow: C56/C130 and C168/C225. Residue N216 is glycosylated (N-linked (GlcNAc...) asparagine). The GPI-anchor amidated glycine moiety is linked to residue G257. Residues 258–282 constitute a propeptide, removed in mature form; sequence PSPCVSSVSAAGWALLSLSCCLMLR.

Belongs to the immunoglobulin superfamily. BTN/MOG family. In terms of processing, N-glycosylated.

Its subcellular location is the cell membrane. Negatively regulates T-cell-mediated immune response by inhibiting T-cell activation, proliferation, cytokine production and development of cytotoxicity. When expressed on the cell surface of tumor macrophages, plays an important role, together with regulatory T-cells (Treg), in the suppression of tumor-associated antigen-specific T-cell immunity. Involved in promoting epithelial cell transformation. The chain is V-set domain-containing T-cell activation inhibitor 1 from Rattus norvegicus (Rat).